The primary structure comprises 373 residues: Ribosomal RNA small subunit methyltransferase H (373 aa).

Residues 92 to 94 (GGH), Asp-111, Tyr-138, Asp-159, and Gln-166 each bind S-adenosyl-L-methionine. 2 stretches are compositionally biased toward basic and acidic residues: residues 343–355 (AERA…ERNP) and 363–373 (RALEKVGGRGS). The disordered stretch occupies residues 343 to 373 (AERADEQEIERNPRSAPVRLRALEKVGGRGS).

This sequence belongs to the methyltransferase superfamily. RsmH family.

The protein localises to the cytoplasm. The catalysed reaction is cytidine(1402) in 16S rRNA + S-adenosyl-L-methionine = N(4)-methylcytidine(1402) in 16S rRNA + S-adenosyl-L-homocysteine + H(+). Specifically methylates the N4 position of cytidine in position 1402 (C1402) of 16S rRNA. In Mycolicibacterium smegmatis (strain ATCC 700084 / mc(2)155) (Mycobacterium smegmatis), this protein is Ribosomal RNA small subunit methyltransferase H.